Consider the following 331-residue polypeptide: MKAILSRLFNHEELTRKEAKNLLLNITRGMYNDAQIAALLTVFQMRGIKVEELIGFREALLTTRIPIDFSAYTPIDIVGTGGDGKNTFNISTCACFIVAGAGYHVAKHGNYGATSVSGASNVIEQHGVKFTNNPDKLTRSMEECGMVYMHAQLFNPAMKSVGPVRKALQVRTIFNLLGPLVNPCLPAYQLLGVADLPQMRLYTNVFQKLGIGFAVVNNLDGYDEISLTDEFKVMTNRYETIYKPSELGFSLARQEELYGGNTPEEASKIFNNVLENKATKAQTDCVLINASFAIQAMEPAKPIEECVAIARESLESGKALNTLKKFVELNS.

Residues Gly79, 82-83 (GD), Thr87, 89-92 (NIST), 107-115 (KHGNYGATS), and Ala119 each bind 5-phospho-alpha-D-ribose 1-diphosphate. Gly79 contacts anthranilate. Residue Ser91 participates in Mg(2+) binding. Residue Asn110 coordinates anthranilate. Arg165 lines the anthranilate pocket. Mg(2+)-binding residues include Asp223 and Glu224.

Belongs to the anthranilate phosphoribosyltransferase family. As to quaternary structure, homodimer. It depends on Mg(2+) as a cofactor.

The catalysed reaction is N-(5-phospho-beta-D-ribosyl)anthranilate + diphosphate = 5-phospho-alpha-D-ribose 1-diphosphate + anthranilate. It functions in the pathway amino-acid biosynthesis; L-tryptophan biosynthesis; L-tryptophan from chorismate: step 2/5. In terms of biological role, catalyzes the transfer of the phosphoribosyl group of 5-phosphorylribose-1-pyrophosphate (PRPP) to anthranilate to yield N-(5'-phosphoribosyl)-anthranilate (PRA). In Phocaeicola vulgatus (strain ATCC 8482 / DSM 1447 / JCM 5826 / CCUG 4940 / NBRC 14291 / NCTC 11154) (Bacteroides vulgatus), this protein is Anthranilate phosphoribosyltransferase.